A 565-amino-acid polypeptide reads, in one-letter code: Berberine bridge enzyme-like C-2 (565 aa).

The signal sequence occupies residues 1–17; the sequence is MFPIIILISFSFTFLFA. N-linked (GlcNAc...) asparagine glycosylation is found at Asn28 and Asn40. Cys32 and Cys94 form a disulfide bridge. The FAD-binding PCMH-type domain maps to 72–248; sequence YMPKPTVIIL…YAWKIRLLKV (177 aa). Residue His109 is modified to Pros-8alpha-FAD histidine. Residues Asn363 and Asn502 are each glycosylated (N-linked (GlcNAc...) asparagine).

Belongs to the oxygen-dependent FAD-linked oxidoreductase family. It depends on FAD as a cofactor.

It is found in the vacuole. It participates in alkaloid biosynthesis; nicotine biosynthesis. Involved in the biosynthesis of pyridine alkaloid natural products, leading mainly to the production of anabasine, anatabine, nicotine and nornicotine, effective deterrents against herbivores with antiparasitic and pesticide properties (neurotoxins); nornicotine serves as the precursor in the synthesis of the carcinogen compound N'-nitrosonornicotine (NNN). Catalyzes a late oxidation step subsequent to the pyridine ring condensation reaction in the biosynthesis of alkaloids. This chain is Berberine bridge enzyme-like C-2, found in Nicotiana tabacum (Common tobacco).